A 200-amino-acid polypeptide reads, in one-letter code: Cell division protein SepF (200 aa).

2 disordered regions span residues 35 to 60 (NLYQ…RWRE) and 170 to 200 (LHEV…RMAQ). Residues 183 to 200 (PTGSPNQTWGNETNRMAQ) are compositionally biased toward polar residues.

This sequence belongs to the SepF family. In terms of assembly, homodimer. Interacts with FtsZ.

It is found in the cytoplasm. Cell division protein that is part of the divisome complex and is recruited early to the Z-ring. Probably stimulates Z-ring formation, perhaps through the cross-linking of FtsZ protofilaments. Its function overlaps with FtsA. In Nostoc punctiforme (strain ATCC 29133 / PCC 73102), this protein is Cell division protein SepF.